Reading from the N-terminus, the 910-residue chain is Eukaryotic translation initiation factor 3 subunit C (910 aa).

The tract at residues 1–21 (MSRFFANGSESESESSEEEIQ) is disordered. The segment covering 11–20 (SESESSEEEI) has biased composition (acidic residues). A phosphoserine mark is found at Ser-34, Ser-165, Ser-176, and Ser-185. The segment at 157–279 (FREAPDQESE…IRKRAEDDED (123 aa)) is disordered. The segment covering 162–186 (DQESEAEDEVVALESDGGDAGDDSD) has biased composition (acidic residues). The span at 194–207 (AVPKAVKSAPAKAA) shows a compositional bias: low complexity. The segment covering 209-235 (ADDDDSDDSIDWDSDSESETESSDDEN) has biased composition (acidic residues). Residues 240 to 268 (MRERFLKRTTEKEEKDDDKRKDKRKEQKT) show a composition bias toward basic and acidic residues. In terms of domain architecture, PCI spans 639–815 (FHMHINLELL…ETVGMHRSEP (177 aa)). A disordered region spans residues 847–910 (FFQRGNMGNR…QQQVQTIDEE (64 aa)). Low complexity predominate over residues 862-874 (NRNQNNQGGNWLG). A compositionally biased stretch (basic residues) spans 882-891 (RNRNQRGHHK). Residues 895 to 910 (DRQQQQQQQVQTIDEE) are compositionally biased toward low complexity.

This sequence belongs to the eIF-3 subunit C family. In terms of assembly, component of the eukaryotic translation initiation factor 3 (eIF-3) complex. The eIF-3 complex interacts with pix.

Its subcellular location is the cytoplasm. Component of the eukaryotic translation initiation factor 3 (eIF-3) complex, which is involved in protein synthesis of a specialized repertoire of mRNAs and, together with other initiation factors, stimulates binding of mRNA and methionyl-tRNAi to the 40S ribosome. The eIF-3 complex specifically targets and initiates translation of a subset of mRNAs involved in cell proliferation. In Drosophila melanogaster (Fruit fly), this protein is Eukaryotic translation initiation factor 3 subunit C.